We begin with the raw amino-acid sequence, 207 residues long: Ribonuclease HII (207 aa).

Residues 20–207 (QLFAGVDEVG…KPVKRVLGIE (188 aa)) enclose the RNase H type-2 domain. The a divalent metal cation site is built by Asp26, Glu27, and Asp118.

Belongs to the RNase HII family. Mn(2+) is required as a cofactor. Mg(2+) serves as cofactor.

It localises to the cytoplasm. It carries out the reaction Endonucleolytic cleavage to 5'-phosphomonoester.. Its function is as follows. Endonuclease that specifically degrades the RNA of RNA-DNA hybrids. In Aliivibrio fischeri (strain ATCC 700601 / ES114) (Vibrio fischeri), this protein is Ribonuclease HII.